The sequence spans 84 residues: Kappa-scoloptoxin(11)-Ssm3a (84 aa).

Residues 1–16 (MSWMFYSFIVFTLAIK) form the signal peptide.

It belongs to the scoloptoxin-11 family. In terms of processing, contains 2 disulfide bonds. As to expression, expressed by the venom gland.

It localises to the secreted. Its function is as follows. Inhibits voltage-gated potassium channel currents in DRG neurons. 200 nM of the toxin inhibits current amplitude by only 25% and even at concentrations up to 5 uM, the toxin does not inhibit all potassium currents. In vivo, insects injected with this toxin showed signs of neurotoxicity including twitching, paralysis, and body contraction. The polypeptide is Kappa-scoloptoxin(11)-Ssm3a (Scolopendra mutilans (Chinese red-headed centipede)).